Here is a 301-residue protein sequence, read N- to C-terminus: MRKIKIGLALGSGAARGWSHIGVINALKKVGIEIDIVAGCSIGSLVGAAYACDRLSALEDWVTSFSYWDVLRLMDLSWQRGGLLRGERVFNQYREIMPETEIENCSRRFAAVATNLSTGRELWFTEGDLHLAIRASCSIPGLMAPVAHNGYWLVDGAVVNPIPISLTRALGADIVIAVDLQHDAHLMQQDLLSFNVSEENSENGDSLPWHARLKERLGSITTRRAVTAPTATEIMTTSIQVLENRLKRNRMAGDPPDILIQPVCPQISTLDFHRAHAAIAAGQLAVERKMDELLPLVRTNI.

One can recognise a PNPLA domain in the interval 8-168; sequence LALGSGAARG…VNPIPISLTR (161 aa). The GXSXG motif lies at 39 to 43; sequence GCSIG. Ser-41 (nucleophile) is an active-site residue. The active-site Proton acceptor is the Asp-155. The short motif at 155–157 is the DGA/G element; that stretch reads DGA.

The protein belongs to the NTE family.

This Escherichia coli (strain K12) protein is NTE family protein RssA (rssA).